Consider the following 197-residue polypeptide: 3-isopropylmalate dehydratase small subunit (197 aa).

This sequence belongs to the LeuD family. LeuD type 1 subfamily. As to quaternary structure, heterodimer of LeuC and LeuD.

It catalyses the reaction (2R,3S)-3-isopropylmalate = (2S)-2-isopropylmalate. It participates in amino-acid biosynthesis; L-leucine biosynthesis; L-leucine from 3-methyl-2-oxobutanoate: step 2/4. In terms of biological role, catalyzes the isomerization between 2-isopropylmalate and 3-isopropylmalate, via the formation of 2-isopropylmaleate. This chain is 3-isopropylmalate dehydratase small subunit, found in Shouchella clausii (strain KSM-K16) (Alkalihalobacillus clausii).